The sequence spans 154 residues: Ribosome maturation factor RimP (154 aa).

This sequence belongs to the RimP family.

It localises to the cytoplasm. Required for maturation of 30S ribosomal subunits. In Ruthia magnifica subsp. Calyptogena magnifica, this protein is Ribosome maturation factor RimP.